The following is a 155-amino-acid chain: Small ribosomal subunit protein uS7c (155 aa).

It belongs to the universal ribosomal protein uS7 family. Part of the 30S ribosomal subunit.

It is found in the plastid. It localises to the chloroplast. Its function is as follows. One of the primary rRNA binding proteins, it binds directly to 16S rRNA where it nucleates assembly of the head domain of the 30S subunit. The polypeptide is Small ribosomal subunit protein uS7c (rps7) (Houttuynia cordata (Chameleon plant)).